Here is a 654-residue protein sequence, read N- to C-terminus: Arrestin domain-containing protein C (654 aa).

Residues 1 to 105 form the C2 domain; that stretch reads MTQRSLKINI…AKRNLMDQWL (105 aa). Residues 616 to 647 are a coiled coil; sequence AKRIFLKIQQIQSERQKQQEQQEQQVVSNLEA.

The protein belongs to the arrestin family.

This chain is Arrestin domain-containing protein C (adcC), found in Dictyostelium discoideum (Social amoeba).